Here is a 533-residue protein sequence, read N- to C-terminus: Tyrosine/DOPA decarboxylase 3 (533 aa).

An N6-(pyridoxal phosphate)lysine modification is found at K319.

This sequence belongs to the group II decarboxylase family. In terms of assembly, homodimer. Requires pyridoxal 5'-phosphate as cofactor. In terms of tissue distribution, roots.

The enzyme catalyses L-tyrosine + H(+) = tyramine + CO2. The catalysed reaction is L-dopa + H(+) = dopamine + CO2. It catalyses the reaction 5-hydroxy-L-tryptophan + H(+) = serotonin + CO2. Marginally higher substrate specificity for L-DOPA over L-tyrosine. This chain is Tyrosine/DOPA decarboxylase 3 (TYDC3), found in Papaver somniferum (Opium poppy).